A 431-amino-acid polypeptide reads, in one-letter code: 5'-deoxyadenosine deaminase (431 aa).

Zn(2+)-binding residues include H65 and H67. 2 residues coordinate substrate: E94 and H185. H212 is a Zn(2+) binding site. Residues E215 and D300 each contribute to the substrate site. D300 provides a ligand contact to Zn(2+).

It belongs to the metallo-dependent hydrolases superfamily. MTA/SAH deaminase family. As to quaternary structure, homotetramer. It depends on Zn(2+) as a cofactor.

The enzyme catalyses 5'-deoxyadenosine + H2O + H(+) = 5'-deoxyinosine + NH4(+). It carries out the reaction S-adenosyl-L-homocysteine + H2O + H(+) = S-inosyl-L-homocysteine + NH4(+). The catalysed reaction is S-methyl-5'-thioadenosine + H2O + H(+) = S-methyl-5'-thioinosine + NH4(+). It catalyses the reaction adenosine + H2O + H(+) = inosine + NH4(+). The protein operates within amino-acid biosynthesis; S-adenosyl-L-methionine biosynthesis. Functionally, catalyzes the deamination of three SAM-derived enzymatic products, namely 5'-deoxyadenosine, S-adenosyl-L-homocysteine, and 5'-methylthioadenosine, to produce the inosine analogs. Can also deaminate adenosine. The preferred substrate for this enzyme is 5'-deoxyadenosine, but all these substrates are efficiently deaminated. Likely functions in a S-adenosyl-L-methionine (SAM) recycling pathway from S-adenosyl-L-homocysteine (SAH) produced from SAM-dependent methylation reactions. May also be involved in the recycling of 5'-deoxyadenosine, whereupon the 5'-deoxyribose moiety of 5'-deoxyinosine is further metabolized to deoxyhexoses used for the biosynthesis of aromatic amino acids in methanogens. The sequence is that of 5'-deoxyadenosine deaminase from Methanopyrus kandleri (strain AV19 / DSM 6324 / JCM 9639 / NBRC 100938).